Reading from the N-terminus, the 304-residue chain is Quinolinate synthase (304 aa).

H23 and S40 together coordinate iminosuccinate. C85 contacts [4Fe-4S] cluster. Iminosuccinate-binding positions include 111–113 and S128; that span reads YIN. Residue C171 coordinates [4Fe-4S] cluster. Residues 197-199 and T214 contribute to the iminosuccinate site; that span reads HPE. [4Fe-4S] cluster is bound at residue C259.

It belongs to the quinolinate synthase family. Type 2 subfamily. [4Fe-4S] cluster is required as a cofactor.

Its subcellular location is the cytoplasm. The catalysed reaction is iminosuccinate + dihydroxyacetone phosphate = quinolinate + phosphate + 2 H2O + H(+). Its pathway is cofactor biosynthesis; NAD(+) biosynthesis; quinolinate from iminoaspartate: step 1/1. Its function is as follows. Catalyzes the condensation of iminoaspartate with dihydroxyacetone phosphate to form quinolinate. The chain is Quinolinate synthase from Clostridioides difficile (strain 630) (Peptoclostridium difficile).